A 433-amino-acid chain; its full sequence is ACT domain-containing protein ACR6 (433 aa).

ACT domains are found at residues 30–110, 120–207, 250–326, and 328–402; these read VIQV…RSSV, SIEL…SCSD, VVTM…ASEG, and ELEL…VKKK.

Its function is as follows. May bind amino acids. The chain is ACT domain-containing protein ACR6 from Arabidopsis thaliana (Mouse-ear cress).